Here is a 184-residue protein sequence, read N- to C-terminus: Latex serine proteinase inhibitor (184 aa).

C45 and C89 are disulfide-bonded. N-linked (GlcNAc...) asparagine glycans are attached at residues N84 and N90. A disulfide bridge connects residues C142 and C153.

It belongs to the protease inhibitor I3 (leguminous Kunitz-type inhibitor) family.

It is found in the secreted. The protein resides in the extracellular space. The chain is Latex serine proteinase inhibitor from Carica papaya (Papaya).